The following is a 433-amino-acid chain: Histidine--tRNA ligase (433 aa).

This sequence belongs to the class-II aminoacyl-tRNA synthetase family. In terms of assembly, homodimer.

The protein localises to the cytoplasm. It catalyses the reaction tRNA(His) + L-histidine + ATP = L-histidyl-tRNA(His) + AMP + diphosphate + H(+). The chain is Histidine--tRNA ligase from Blochmanniella floridana.